The primary structure comprises 262 residues: Indole-3-glycerol phosphate synthase (262 aa).

Belongs to the TrpC family.

It catalyses the reaction 1-(2-carboxyphenylamino)-1-deoxy-D-ribulose 5-phosphate + H(+) = (1S,2R)-1-C-(indol-3-yl)glycerol 3-phosphate + CO2 + H2O. The protein operates within amino-acid biosynthesis; L-tryptophan biosynthesis; L-tryptophan from chorismate: step 4/5. The polypeptide is Indole-3-glycerol phosphate synthase (Bordetella bronchiseptica (strain ATCC BAA-588 / NCTC 13252 / RB50) (Alcaligenes bronchisepticus)).